The following is a 1137-amino-acid chain: Otoancorin (1137 aa).

A signal peptide spans 1–23; it reads MSQGPRTCSLLLVLLLSHGGAYQ. N-linked (GlcNAc...) asparagine glycans are attached at residues Asn-156, Asn-211, Asn-244, Asn-289, Asn-321, Asn-380, Asn-384, Asn-530, Asn-594, Asn-740, and Asn-798. Over residues 1095 to 1115 the composition is skewed to polar residues; it reads HSWQTDPLSSSPTWPASTGSP. The disordered stretch occupies residues 1095 to 1119; it reads HSWQTDPLSSSPTWPASTGSPTGEP. Gly-1113 carries the GPI-anchor amidated glycine lipid modification. A propeptide spans 1114–1137 (removed in mature form); sequence SPTGEPASQALWLGCTLLLLTAKS.

Belongs to the stereocilin family. In terms of tissue distribution, expressed in the inner ear and vestibule.

It is found in the apical cell membrane. Its subcellular location is the secreted. The protein resides in the extracellular space. It localises to the extracellular matrix. Its function is as follows. May act as an adhesion molecule. The sequence is that of Otoancorin (Otoa) from Mus musculus (Mouse).